Here is an 840-residue protein sequence, read N- to C-terminus: V-type proton ATPase 116 kDa subunit a 4 (840 aa).

Over 1 to 390 (MVSVFRSEEM…DAYGVGSYRE (390 aa)) the chain is Cytoplasmic. A helical transmembrane segment spans residues 391-409 (INPAPYTIITFPFLFAVMF). Topologically, residues 410 to 411 (GD) are vacuolar. A helical membrane pass occupies residues 412–428 (CGHGTVMLLAALWMILN). Residues 429-443 (ERRLLSQKTDNEIWN) lie on the Cytoplasmic side of the membrane. A helical transmembrane segment spans residues 444–473 (TFFHGRYLILLMGIFSIYTGLIYNDCFSKS). At 474-538 (LNIFGSSWSV…ASNKLTFLNS (65 aa)) the chain is on the vacuolar side. Residues 539 to 558 (YKMKMSVILGIVQMVFGVIL) traverse the membrane as a helical segment. The Cytoplasmic segment spans residues 559-576 (SLFNHIYFRRTLNIILQF). Residues 577–597 (IPEMIFILCLFGYLVFMIIFK) form a helical membrane-spanning segment. Residues 598 to 642 (WCCFDVHVSQHAPSILIHFINMFLFNYSDSSNAPLYKHQQEVQSF) are Vacuolar-facing. The helical transmembrane segment at 643-662 (FVVMALISVPWMLLIKPFIL) threads the bilayer. The Cytoplasmic segment spans residues 663–727 (RASHRKSQLQ…DVFVHQAIHT (65 aa)). Residues 675–704 (RIQEDATENIEGDSSSPSSRSGQRTSADTH) form a disordered region. The chain crosses the membrane as a helical span at residues 728 to 752 (IEYCLGCISNTASYLRLWALSLAHA). Residues 753 to 773 (QLSEVLWTMVMNSGLQTRGWG) lie on the Vacuolar side of the membrane. Residues 774–812 (GIVGVFIIFAVFAVLTVAILLIMEGLSAFLHALRLHWVE) traverse the membrane as a helical segment. The Cytoplasmic portion of the chain corresponds to 813 to 840 (FQNKFYVGDGYKFSPFSFKHILDGTAEE).

Belongs to the V-ATPase 116 kDa subunit family. In terms of assembly, V-ATPase is a heteromultimeric enzyme made up of two complexes: the ATP-hydrolytic V1 complex and the proton translocation V0 complex. The V1 complex consists of three catalytic AB heterodimers that form a heterohexamer, three peripheral stalks each consisting of EG heterodimers, one central rotor including subunits D and F, and the regulatory subunits C and H. The proton translocation complex V0 consists of the proton transport subunit a, a ring of proteolipid subunits c9c'', rotary subunit d, subunits e and f, and the accessory subunits ATP6AP1/Ac45 and ATP6AP2/PRR. Interacts with the V1 complex V-ATPase subunit A ATP6V1A. Interacts with the V0 complex V-ATPase subunit c ATP6V0C. Expressed in adult and fetal kidney. Found in the inner ear.

It is found in the apical cell membrane. Its subcellular location is the basolateral cell membrane. In terms of biological role, subunit of the V0 complex of vacuolar(H+)-ATPase (V-ATPase), a multisubunit enzyme composed of a peripheral complex (V1) that hydrolyzes ATP and a membrane integral complex (V0) that translocates protons. V-ATPase is responsible for acidifying and maintaining the pH of intracellular compartments and in some cell types, is targeted to the plasma membrane, where it is responsible for acidifying the extracellular environment. Involved in normal vectorial acid transport into the urine by the kidney. The chain is V-type proton ATPase 116 kDa subunit a 4 (ATP6V0A4) from Homo sapiens (Human).